We begin with the raw amino-acid sequence, 57 residues long: Small ribosomal subunit protein eS27 (57 aa).

Zn(2+) is bound by residues Cys-10, Cys-13, Cys-29, and Cys-32. Residues 10–32 (CPDCENEQSLFEKAASEVSCAVC) form a C4-type zinc finger.

This sequence belongs to the eukaryotic ribosomal protein eS27 family. Part of the 30S ribosomal subunit. It depends on Zn(2+) as a cofactor.

This Haloarcula marismortui (strain ATCC 43049 / DSM 3752 / JCM 8966 / VKM B-1809) (Halobacterium marismortui) protein is Small ribosomal subunit protein eS27.